We begin with the raw amino-acid sequence, 190 residues long: Hypoxanthine/guanine phosphoribosyltransferase (190 aa).

The protein belongs to the purine/pyrimidine phosphoribosyltransferase family. Archaeal HPRT subfamily. In terms of assembly, homodimer.

It localises to the cytoplasm. The enzyme catalyses IMP + diphosphate = hypoxanthine + 5-phospho-alpha-D-ribose 1-diphosphate. The catalysed reaction is GMP + diphosphate = guanine + 5-phospho-alpha-D-ribose 1-diphosphate. Its pathway is purine metabolism; IMP biosynthesis via salvage pathway; IMP from hypoxanthine: step 1/1. Functionally, catalyzes a salvage reaction resulting in the formation of IMP that is energically less costly than de novo synthesis. The chain is Hypoxanthine/guanine phosphoribosyltransferase from Methanosalsum zhilinae (strain DSM 4017 / NBRC 107636 / OCM 62 / WeN5) (Methanohalophilus zhilinae).